The following is a 1465-amino-acid chain: DNA polymerase III PolC-type (1465 aa).

The 157-residue stretch at 427–583 folds into the Exonuclease domain; that stretch reads YVVFDVETTG…YDAEATGRLL (157 aa).

This sequence belongs to the DNA polymerase type-C family. PolC subfamily.

The protein resides in the cytoplasm. It catalyses the reaction DNA(n) + a 2'-deoxyribonucleoside 5'-triphosphate = DNA(n+1) + diphosphate. Its function is as follows. Required for replicative DNA synthesis. This DNA polymerase also exhibits 3' to 5' exonuclease activity. The chain is DNA polymerase III PolC-type from Streptococcus pyogenes serotype M6 (strain ATCC BAA-946 / MGAS10394).